The following is a 260-amino-acid chain: Acetylglutamate kinase (260 aa).

Substrate is bound by residues 41–42 (GG), R63, and N157.

It belongs to the acetylglutamate kinase family. ArgB subfamily.

Its subcellular location is the cytoplasm. The catalysed reaction is N-acetyl-L-glutamate + ATP = N-acetyl-L-glutamyl 5-phosphate + ADP. Its pathway is amino-acid biosynthesis; L-arginine biosynthesis; N(2)-acetyl-L-ornithine from L-glutamate: step 2/4. Its function is as follows. Catalyzes the ATP-dependent phosphorylation of N-acetyl-L-glutamate. The protein is Acetylglutamate kinase of Acidobacterium capsulatum (strain ATCC 51196 / DSM 11244 / BCRC 80197 / JCM 7670 / NBRC 15755 / NCIMB 13165 / 161).